The sequence spans 545 residues: Glucose-6-phosphate isomerase (545 aa).

The active-site Proton donor is the E351. Catalysis depends on residues H382 and K510.

It belongs to the GPI family.

The protein localises to the cytoplasm. The catalysed reaction is alpha-D-glucose 6-phosphate = beta-D-fructose 6-phosphate. Its pathway is carbohydrate biosynthesis; gluconeogenesis. It functions in the pathway carbohydrate degradation; glycolysis; D-glyceraldehyde 3-phosphate and glycerone phosphate from D-glucose: step 2/4. Its function is as follows. Catalyzes the reversible isomerization of glucose-6-phosphate to fructose-6-phosphate. The sequence is that of Glucose-6-phosphate isomerase from Shewanella denitrificans (strain OS217 / ATCC BAA-1090 / DSM 15013).